Consider the following 267-residue polypeptide: uncharacterized protein (267 aa).

The segment at 1–55 (MTEERKETFEEEINQSERIDADEEPLSRMSRKASRQSKQKQKQKQKPRQERGEST) is disordered. The segment covering 9-24 (FEEEINQSERIDADEE) has biased composition (acidic residues). The span at 29–46 (MSRKASRQSKQKQKQKQK) shows a compositional bias: basic residues. Helical transmembrane passes span 93–115 (YKYG…WFQL), 135–157 (GFLV…IWAV), 173–195 (AVLG…FAIV), 199–221 (MLTV…LYVQ), and 234–256 (YIYC…WPFI).

It localises to the cell membrane. This is an uncharacterized protein from Bacillus subtilis (strain 168).